We begin with the raw amino-acid sequence, 427 residues long: Glutamate-1-semialdehyde 2,1-aminomutase (427 aa).

Lysine 265 carries the N6-(pyridoxal phosphate)lysine modification.

The protein belongs to the class-III pyridoxal-phosphate-dependent aminotransferase family. HemL subfamily. As to quaternary structure, homodimer. The cofactor is pyridoxal 5'-phosphate.

The protein localises to the cytoplasm. It catalyses the reaction (S)-4-amino-5-oxopentanoate = 5-aminolevulinate. The protein operates within porphyrin-containing compound metabolism; protoporphyrin-IX biosynthesis; 5-aminolevulinate from L-glutamyl-tRNA(Glu): step 2/2. This chain is Glutamate-1-semialdehyde 2,1-aminomutase, found in Pseudomonas putida (strain W619).